The following is a 208-amino-acid chain: Thymidylate kinase (208 aa).

11–18 (GGEGVGKS) lines the ATP pocket.

This sequence belongs to the thymidylate kinase family.

The catalysed reaction is dTMP + ATP = dTDP + ADP. Its function is as follows. Phosphorylation of dTMP to form dTDP in both de novo and salvage pathways of dTTP synthesis. The protein is Thymidylate kinase of Methylococcus capsulatus (strain ATCC 33009 / NCIMB 11132 / Bath).